The primary structure comprises 191 residues: Fe/S biogenesis protein NfuA (191 aa).

[4Fe-4S] cluster is bound by residues cysteine 149 and cysteine 152.

This sequence belongs to the NfuA family. Homodimer. [4Fe-4S] cluster is required as a cofactor.

Functionally, involved in iron-sulfur cluster biogenesis. Binds a 4Fe-4S cluster, can transfer this cluster to apoproteins, and thereby intervenes in the maturation of Fe/S proteins. Could also act as a scaffold/chaperone for damaged Fe/S proteins. The chain is Fe/S biogenesis protein NfuA from Buchnera aphidicola subsp. Baizongia pistaciae (strain Bp).